We begin with the raw amino-acid sequence, 548 residues long: Synaptic vesicle 2-related protein (548 aa).

Residues 1 to 87 are Cytoplasmic-facing; that stretch reads MEEDLFQLRQ…GFGRFQWKLS (87 aa). 2 positions are modified to phosphoserine: Ser-25 and Ser-31. A helical membrane pass occupies residues 88 to 108; that stretch reads VLTGLAWMADAMEMMILSILA. Residues 109-122 lie on the Vesicular side of the membrane; that stretch reads PQLHCEWRLPSWQV. The chain crosses the membrane as a helical span at residues 123-143; sequence ALLTSVVFIGMMSSSTLWGNI. At 144-156 the chain is on the cytoplasmic side; sequence SDQYGRKTGLKIS. A helical transmembrane segment spans residues 157-177; that stretch reads VFWTLYYGILSAFAPVYSWIL. The Vesicular segment spans residues 178–180; sequence VLR. A helical transmembrane segment spans residues 181–201; the sequence is GLVGFGIGGVPQSVTLYAEFL. The Cytoplasmic portion of the chain corresponds to 202–209; sequence PMKARAKC. Residues 210–230 traverse the membrane as a helical segment; the sequence is ILLIEVFWAIGTVFEVLLAVF. Over 231–238 the chain is Vesicular; the sequence is VMPSLGWR. A helical membrane pass occupies residues 239–259; that stretch reads WLLLLSAAPLLVFAVLCFWLP. Residues 260-316 lie on the Cytoplasmic side of the membrane; sequence ESARYDVLSGNQEKAIATLKRIATENGAPMPLGKLIISRQEDRGKMRDLFTPHFRWT. The chain crosses the membrane as a helical span at residues 317–337; that stretch reads TLLLWFIWFSNAFSYYGLVLL. Residues 338–373 are Vesicular-facing; that stretch reads TTELFQAGDVCSISSRKKAVEAKCSLACEYLSKEDY. The chain crosses the membrane as a helical span at residues 374–394; the sequence is MDLLWTTLSEFPGVLVTLWVI. Residues 395 to 401 are Cytoplasmic-facing; that stretch reads DRLGRKK. A helical transmembrane segment spans residues 402 to 422; that stretch reads TMALCFVIFSLCSLLLFICIG. Residues 423-424 are Vesicular-facing; it reads RN. Residues 425-445 traverse the membrane as a helical segment; the sequence is VLTLLLFIARAFISGGFQAAY. At 446–457 the chain is on the cytoplasmic side; it reads VYTPEVYPTATR. Residues 458-478 form a helical membrane-spanning segment; sequence ALGLGTCSGMARVGALITPFI. Residues 479–489 are Vesicular-facing; that stretch reads AQVMLESSVYL. The helical transmembrane segment at 490–510 threads the bilayer; it reads TLAVYSGCCLLAALASCFLPI. Over 511 to 548 the chain is Cytoplasmic; it reads ETKGRALQESSHREWGQEMVGRGTNSTGVPRSNSGSQE. Positions 523-548 are disordered; it reads REWGQEMVGRGTNSTGVPRSNSGSQE. The segment covering 533-548 has biased composition (polar residues); it reads GTNSTGVPRSNSGSQE. Phosphoserine is present on Ser-542.

Belongs to the major facilitator superfamily. Detected in brain (at protein level). Detected in brain, in synaptic layers of the cerebellum, hippocampus and cerebral cortex.

It is found in the cytoplasmic vesicle. The protein resides in the secretory vesicle. It localises to the synaptic vesicle membrane. The sequence is that of Synaptic vesicle 2-related protein (Svop) from Rattus norvegicus (Rat).